Here is a 354-residue protein sequence, read N- to C-terminus: Probable L-ascorbate-6-phosphate lactonase UlaG (354 aa).

Belongs to the UlaG family. A divalent metal cation serves as cofactor.

The protein localises to the cytoplasm. The enzyme catalyses L-ascorbate 6-phosphate + H2O = 3-dehydro-L-gulonate 6-phosphate. It participates in cofactor degradation; L-ascorbate degradation; D-xylulose 5-phosphate from L-ascorbate: step 1/4. In terms of biological role, probably catalyzes the hydrolysis of L-ascorbate-6-P into 3-keto-L-gulonate-6-P. Is essential for L-ascorbate utilization under anaerobic conditions. The polypeptide is Probable L-ascorbate-6-phosphate lactonase UlaG (Shigella boydii serotype 4 (strain Sb227)).